The following is a 212-amino-acid chain: FMN-dependent NADH:quinone oxidoreductase (212 aa).

Residues serine 10, 16-18 (SFS), and 98-101 (MWNF) each bind FMN.

The protein belongs to the azoreductase type 1 family. As to quaternary structure, homodimer. Requires FMN as cofactor.

The catalysed reaction is 2 a quinone + NADH + H(+) = 2 a 1,4-benzosemiquinone + NAD(+). It carries out the reaction N,N-dimethyl-1,4-phenylenediamine + anthranilate + 2 NAD(+) = 2-(4-dimethylaminophenyl)diazenylbenzoate + 2 NADH + 2 H(+). Its function is as follows. Quinone reductase that provides resistance to thiol-specific stress caused by electrophilic quinones. Functionally, also exhibits azoreductase activity. Catalyzes the reductive cleavage of the azo bond in aromatic azo compounds to the corresponding amines. This chain is FMN-dependent NADH:quinone oxidoreductase, found in Desulfotalea psychrophila (strain LSv54 / DSM 12343).